Consider the following 501-residue polypeptide: TGF-beta receptor type-1 (501 aa).

The signal sequence occupies residues 1–29 (MEAASAALRRCLLLIVLVAAATLLPGAKA). Over 30 to 124 (LQCFCHLCTK…QSAGLGPVEL (95 aa)) the chain is Extracellular. 5 disulfides stabilise this stretch: Cys32-Cys50, Cys34-Cys37, Cys44-Cys67, Cys82-Cys94, and Cys95-Cys100. N-linked (GlcNAc...) asparagine glycosylation is present at Asn41. A helical transmembrane segment spans residues 125–145 (AAVIAGPVCFVCIALMLMVYI). The Cytoplasmic portion of the chain corresponds to 146-501 (CHNRTVIHHR…QLSQQEGIKM (356 aa)). A Phosphoserine modification is found at Ser163. In terms of domain architecture, GS spans 173–202 (TTLKDLIYDMTTSGSGSGLPLLVQRTIART). 2 positions are modified to phosphothreonine; by TGFBR2: Thr183 and Thr184. 3 positions are modified to phosphoserine; by TGFBR2: Ser185, Ser187, and Ser189. The FKBP1A-binding motif lies at 191 to 192 (LP). The region spanning 203–493 (IVLQESIGKG…LRIKKTLSQL (291 aa)) is the Protein kinase domain. ATP contacts are provided by residues 209–217 (IGKGRFGEV) and Lys230. Asp331 acts as the Proton acceptor in catalysis. Residue Lys389 forms a Glycyl lysine isopeptide (Lys-Gly) (interchain with G-Cter in SUMO) linkage.

It belongs to the protein kinase superfamily. TKL Ser/Thr protein kinase family. TGFB receptor subfamily. As to quaternary structure, homodimer; in the endoplasmic reticulum but also at the cell membrane. Heterohexamer; TGFB1, TGFB2 and TGFB3 homodimeric ligands assemble a functional receptor composed of two TGFBR1 and TGFBR2 heterodimers to form a ligand-receptor heterohexamer. The respective affinity of TGBRB1 and TGFBR2 for the ligands may modulate the kinetics of assembly of the receptor and may explain the different biological activities of TGFB1, TGFB2 and TGFB3. Component of a complex composed of TSC22D1 (via N-terminus), TGFBR1 and TGFBR2; the interaction between TSC22D1 and TGFBR1 is inhibited by SMAD7 and promoted by TGFB1. Interacts with CD109; inhibits TGF-beta receptor activation in keratinocytes. Interacts with RBPMS. Interacts with SMAD2, SMAD3 and ZFYVE9; ZFYVE9 recruits SMAD2 and SMAD3 to the TGF-beta receptor. Interacts with TRAF6 and MAP3K7; induces MAP3K7 activation by TRAF6. Interacts with PARD6A; involved in TGF-beta induced epithelial to mesenchymal transition. Interacts with NEDD4L. Interacts with SMAD7, SMURF1 and SMURF2; SMAD7 recruits NEDD4L, SMURF1 and SMURF2 to the TGF-beta receptor. Interacts with USP15 and VPS39. Interacts (unphosphorylated) with FKBP1A; prevents TGFBR1 phosphorylation by TGFBR2 and stabilizes it in the inactive conformation. Interacts with SDCBP (via C-terminus). Interacts with CAV1 and this interaction is impaired in the presence of SDCBP. Interacts with APPL1; interaction is TGF beta dependent; mediates trafficking of the TGFBR1 from the endosomes to the nucleus via microtubules in a TRAF6-dependent manner. Interacts with GPR50; this interaction promotes the constitutive activation of SMAD signaling pathway. Mg(2+) serves as cofactor. It depends on Mn(2+) as a cofactor. Post-translationally, phosphorylated at basal levels in the absence of ligand. Activated upon phosphorylation by TGFBR2, mainly in the GS domain. Phosphorylation in the GS domain abrogates FKBP1A-binding. In terms of processing, N-Glycosylated. Ubiquitinated; undergoes ubiquitination catalyzed by several E3 ubiquitin ligases including SMURF1, SMURF2 and NEDD4L2. Results in the proteasomal and/or lysosomal degradation of the receptor thereby negatively regulating its activity. Deubiquitinated by USP15, leading to stabilization of the protein and enhanced TGF-beta signal. Its ubiquitination and proteasome-mediated degradation is negatively regulated by SDCBP. Urogenital ridge, testis, ovary, brain and lungs.

The protein localises to the cell membrane. Its subcellular location is the cell junction. It localises to the tight junction. The protein resides in the membrane raft. It is found in the cell surface. It carries out the reaction L-threonyl-[receptor-protein] + ATP = O-phospho-L-threonyl-[receptor-protein] + ADP + H(+). It catalyses the reaction L-seryl-[receptor-protein] + ATP = O-phospho-L-seryl-[receptor-protein] + ADP + H(+). Its activity is regulated as follows. Kept in an inactive conformation by FKBP1A preventing receptor activation in absence of ligand. CD109 is another inhibitor of the receptor. Transmembrane serine/threonine kinase forming with the TGF-beta type II serine/threonine kinase receptor, TGFBR2, the non-promiscuous receptor for the TGF-beta cytokines TGFB1, TGFB2 and TGFB3. Transduces the TGFB1, TGFB2 and TGFB3 signal from the cell surface to the cytoplasm and is thus regulating a plethora of physiological and pathological processes including cell cycle arrest in epithelial and hematopoietic cells, control of mesenchymal cell proliferation and differentiation, wound healing, extracellular matrix production, immunosuppression and carcinogenesis. The formation of the receptor complex composed of 2 TGFBR1 and 2 TGFBR2 molecules symmetrically bound to the cytokine dimer results in the phosphorylation and the activation of TGFBR1 by the constitutively active TGFBR2. Activated TGFBR1 phosphorylates SMAD2 which dissociates from the receptor and interacts with SMAD4. The SMAD2-SMAD4 complex is subsequently translocated to the nucleus where it modulates the transcription of the TGF-beta-regulated genes. This constitutes the canonical SMAD-dependent TGF-beta signaling cascade. Also involved in non-canonical, SMAD-independent TGF-beta signaling pathways. For instance, TGFBR1 induces TRAF6 autoubiquitination which in turn results in MAP3K7 ubiquitination and activation to trigger apoptosis. Also regulates epithelial to mesenchymal transition through a SMAD-independent signaling pathway through PARD6A phosphorylation and activation. In Rattus norvegicus (Rat), this protein is TGF-beta receptor type-1 (Tgfbr1).